The following is a 260-amino-acid chain: Hydroxyethylthiazole kinase (260 aa).

Met-36 is a binding site for substrate. ATP-binding residues include Arg-112 and Thr-157. Gly-184 contacts substrate.

Belongs to the Thz kinase family. The cofactor is Mg(2+).

It carries out the reaction 5-(2-hydroxyethyl)-4-methylthiazole + ATP = 4-methyl-5-(2-phosphooxyethyl)-thiazole + ADP + H(+). It participates in cofactor biosynthesis; thiamine diphosphate biosynthesis; 4-methyl-5-(2-phosphoethyl)-thiazole from 5-(2-hydroxyethyl)-4-methylthiazole: step 1/1. Functionally, catalyzes the phosphorylation of the hydroxyl group of 4-methyl-5-beta-hydroxyethylthiazole (THZ). The protein is Hydroxyethylthiazole kinase of Shouchella clausii (strain KSM-K16) (Alkalihalobacillus clausii).